The sequence spans 591 residues: Maintenance of mitochondrial morphology protein 1 (591 aa).

Topologically, residues 1–83 (MGFNIPWNGT…AQPSLSFTQG (83 aa)) are lumenal. Residues 84-104 (LLVGQLSVVLLIGAFIKFFIF) form a helical membrane-spanning segment. Topologically, residues 105–591 (GEAPPPPSRS…GSMPDSVAVT (487 aa)) are cytoplasmic. Disordered regions lie at residues 138-159 (PRTLREKPSTSNILRPVPSSST), 170-189 (YSATPTNPTSKHGRSRVHHS), 334-398 (PGTS…KHAH), and 479-591 (EAEA…VAVT). Composition is skewed to polar residues over residues 146–159 (STSNILRPVPSSST) and 170–179 (YSATPTNPTS). Over residues 180 to 189 (KHGRSRVHHS) the composition is skewed to basic residues. An SMP-LTD domain is found at 192–462 (QPESLDWFNV…EPRVQVVGLP (271 aa)). Over residues 336 to 371 (TSDQTMGPSASPPNQSTSTETASINDQTSEGQSTQR) the composition is skewed to polar residues. The span at 379-389 (PTNSTPTAATA) shows a compositional bias: low complexity. Composition is skewed to gly residues over residues 496–525 (TAGGDGMRGRGGGGGGGGLRGNSSGRGMGY) and 536–550 (GDGGTGVVQGQGAGG). The segment covering 563-578 (GGDDGEGPGRRSDERF) has biased composition (basic and acidic residues).

Belongs to the MMM1 family. In terms of assembly, homodimer. Component of the ER-mitochondria encounter structure (ERMES) or MDM complex, composed of MMM1, MDM10, MDM12 and MDM34. An MMM1 homodimer associates with one molecule of MDM12 on each side in a pairwise head-to-tail manner, and the SMP-LTD domains of MMM1 and MDM12 generate a continuous hydrophobic tunnel for phospholipid trafficking.

The protein localises to the endoplasmic reticulum membrane. In terms of biological role, component of the ERMES/MDM complex, which serves as a molecular tether to connect the endoplasmic reticulum (ER) and mitochondria. Components of this complex are involved in the control of mitochondrial shape and protein biogenesis, and function in nonvesicular lipid trafficking between the ER and mitochondria. The MDM12-MMM1 subcomplex functions in the major beta-barrel assembly pathway that is responsible for biogenesis of all outer membrane beta-barrel proteins, and acts in a late step after the SAM complex. The MDM10-MDM12-MMM1 subcomplex further acts in the TOM40-specific pathway after the action of the MDM12-MMM1 complex. Essential for establishing and maintaining the structure of mitochondria and maintenance of mtDNA nucleoids. In Ajellomyces capsulatus (strain G186AR / H82 / ATCC MYA-2454 / RMSCC 2432) (Darling's disease fungus), this protein is Maintenance of mitochondrial morphology protein 1.